The chain runs to 429 residues: Histidinol dehydrogenase (429 aa).

NAD(+) contacts are provided by Tyr-127, Gln-188, and Asn-211. Positions 234, 256, and 259 each coordinate substrate. Zn(2+) contacts are provided by Gln-256 and His-259. Catalysis depends on proton acceptor residues Glu-324 and His-325. His-325, Asp-358, Glu-412, and His-417 together coordinate substrate. Asp-358 contacts Zn(2+). Position 417 (His-417) interacts with Zn(2+).

The protein belongs to the histidinol dehydrogenase family. Requires Zn(2+) as cofactor.

The catalysed reaction is L-histidinol + 2 NAD(+) + H2O = L-histidine + 2 NADH + 3 H(+). It participates in amino-acid biosynthesis; L-histidine biosynthesis; L-histidine from 5-phospho-alpha-D-ribose 1-diphosphate: step 9/9. Catalyzes the sequential NAD-dependent oxidations of L-histidinol to L-histidinaldehyde and then to L-histidine. This is Histidinol dehydrogenase from Bacillus thuringiensis subsp. konkukian (strain 97-27).